Consider the following 353-residue polypeptide: Nicotinate-nucleotide--dimethylbenzimidazole phosphoribosyltransferase (353 aa).

E318 (proton acceptor) is an active-site residue.

This sequence belongs to the CobT family.

It catalyses the reaction 5,6-dimethylbenzimidazole + nicotinate beta-D-ribonucleotide = alpha-ribazole 5'-phosphate + nicotinate + H(+). Its pathway is nucleoside biosynthesis; alpha-ribazole biosynthesis; alpha-ribazole from 5,6-dimethylbenzimidazole: step 1/2. In terms of biological role, catalyzes the synthesis of alpha-ribazole-5'-phosphate from nicotinate mononucleotide (NAMN) and 5,6-dimethylbenzimidazole (DMB). The sequence is that of Nicotinate-nucleotide--dimethylbenzimidazole phosphoribosyltransferase from Desulforudis audaxviator (strain MP104C).